Here is a 341-residue protein sequence, read N- to C-terminus: MRIGVLTSGGDCPGLNAVIRSVVHRAVVDHGDEVIGFRDGWKGLLECDYLKLDLDAVGGILARGGTILGSSRVRPEHLRDGVERARGHVEELGLDAIIPIGGEGTLKAARLLSDNGLPIVGVPKTIDNDIAVTDVTFGFDTAVTVATEALDRLKTTAESHQRVLIVEVMGRHTGWIALHSGMAAGAHAVVVPERPFDIDELTAKVGERFSAGKRFAIVVAAEGAKPKAGTMDFDEGGKDVYGHERFAGIARQLSIELEERLGKEARPVILGHVQRGGTPTAYDRVLATRFGWHAVEAVHRGEFGKMTALRGTDIEMVSLADAVESLKTVPDARYAEAECVL.

ATP contacts are provided by residues Gly-10, 72–73 (RV), and 102–105 (GEGT). Glu-103 is a binding site for Mg(2+). Substrate-binding positions include 125–127 (TID), Arg-162, 169–171 (MGR), Glu-222, Arg-266, and 272–275 (HVQR). Asp-127 functions as the Proton acceptor in the catalytic mechanism.

It belongs to the phosphofructokinase type A (PFKA) family. Mixed-substrate PFK group III subfamily. In terms of assembly, homodimer or homotetramer. It depends on Mg(2+) as a cofactor.

Its subcellular location is the cytoplasm. It catalyses the reaction beta-D-fructose 6-phosphate + ATP = beta-D-fructose 1,6-bisphosphate + ADP + H(+). The protein operates within carbohydrate degradation; glycolysis; D-glyceraldehyde 3-phosphate and glycerone phosphate from D-glucose: step 3/4. Catalyzes the phosphorylation of D-fructose 6-phosphate to fructose 1,6-bisphosphate by ATP, the first committing step of glycolysis. This chain is ATP-dependent 6-phosphofructokinase 3, found in Streptomyces coelicolor (strain ATCC BAA-471 / A3(2) / M145).